The following is a 96-amino-acid chain: Co-chaperonin GroES (96 aa).

The protein belongs to the GroES chaperonin family. As to quaternary structure, heptamer of 7 subunits arranged in a ring. Interacts with the chaperonin GroEL.

It is found in the cytoplasm. In terms of biological role, together with the chaperonin GroEL, plays an essential role in assisting protein folding. The GroEL-GroES system forms a nano-cage that allows encapsulation of the non-native substrate proteins and provides a physical environment optimized to promote and accelerate protein folding. GroES binds to the apical surface of the GroEL ring, thereby capping the opening of the GroEL channel. This Teredinibacter turnerae (strain ATCC 39867 / T7901) protein is Co-chaperonin GroES.